Consider the following 453-residue polypeptide: MPNNLQHQEGSYSLRSSNDVSPADDWTQTNDPKEKKRIQNRVAQRTYRNRIRARLEELENKIRCHEKASKQDGNENEDRASEKAMAQDFLITDQALQSLTLPRRVSSAGLSQEPATPPDLLLPSFFHQQQVKIPSAADELNQPKPPSSPPAWAEGQLNVAPRAAQARSIAPTSTGMHQISPSYGPPVFLPTEDLSIDIISSRGLSSSWKTAADLTVQGTHPLPAFPSCSLANIESPSPASSQATDPMDMTFHTATEANTAILPGHRSSLDERLEYVLERAEQVGFDNFDSLVTAYYSETFHGSSRLASEQRLSRNRRLPRVIAEIFRAASHWSAWERGGMNQEVIKSAECLLISEGTAARNALEGSLSLLVDGGNGSGDASSVERLVQNEIPNLWALMTSLASGTHSPRQQDRSGTALAAIMLLYFSGSMPKEQLLRLLIICLPDPVSPQKNN.

Over residues 1 to 30 (MPNNLQHQEGSYSLRSSNDVSPADDWTQTN) the composition is skewed to polar residues. Residues 1–45 (MPNNLQHQEGSYSLRSSNDVSPADDWTQTNDPKEKKRIQNRVAQR) are disordered. In terms of domain architecture, bZIP spans 30 to 62 (NDPKEKKRIQNRVAQRTYRNRIRARLEELENKI). The tract at residues 33–50 (KEKKRIQNRVAQRTYRNR) is basic motif. The interval 51–58 (IRARLEEL) is leucine-zipper. Residues 160-184 (APRAAQARSIAPTSTGMHQISPSYG) are disordered. Polar residues predominate over residues 170–181 (APTSTGMHQISP).

It belongs to the bZIP family.

The protein localises to the nucleus. Its function is as follows. Transcription factor that positively regulates the expression of the gene clusters that mediate the biosynthesis of pestheic acid, a diphenyl ether which is a biosynthetic precursor of the unique chloropupukeananes. In Floropilus chiversii (Chaetomium chiversii), this protein is Transcription factor radR.